The sequence spans 238 residues: MDAVNFSILAPRYGSHPMMSAWSGIGTSDMNGGAFNWGGIWSGIKNFGSNVKNWGSRAWNSQTGKLLRQKLNDTKVREKLVEGISTGVHGALDIANQEIAKQIERRLERQQPLEPEVEEETVETKSEAKAPLVVEMPLKRPRDEDLVITADEPPSYEETIKTMAPLVPMTRPHPSMARPVIADRPTTLELKPSDQPPPYSPQSSNMPVTAPVRSRGWQGTLANIVGVGLSNVKRRRCF.

A propeptide spanning residues 1 to 33 is cleaved from the precursor; sequence MDAVNFSILAPRYGSHPMMSAWSGIGTSDMNGG. Residues 34–54 form an amphipathic alpha-helix essential for membrane lytic activity region; it reads AFNWGGIWSGIKNFGSNVKNW. Positions 36–53 are involved in endosomal membrane lysis; it reads NWGGIWSGIKNFGSNVKN. An interaction with hexon protein region spans residues 48-74; that stretch reads GSNVKNWGSRAWNSQTGKLLRQKLNDT. The Nuclear export signal signature appears at 67 to 76; that stretch reads LRQKLNDTKV. Positions 153–156 match the PPXY motif motif; it reads PPSY. The segment at 187-212 is disordered; sequence TLELKPSDQPPPYSPQSSNMPVTAPV. Residues 219 to 230 carry the Nuclear export signal motif; that stretch reads GTLANIVGVGLS. An interaction with hexon protein region spans residues 221 to 227; the sequence is LANIVGV. Residues 228 to 238 form a binds to importin alpha/beta, involved in hexon nuclear import region; the sequence is GLSNVKRRRCF. The Nuclear localization signal signature appears at 233-236; sequence KRRR.

Belongs to the adenoviridae protein VI family. Interacts with hexon protein; this interaction allows nuclear import of hexon trimers and possibly pre-capsid assembly. Interacts (via C-terminal NLS) with importin alpha/beta. As to quaternary structure, interacts (via PPxY motif) with host NEDD4 ubiquitine ligase; this interaction might play a role in virus intracellular transport during entry. Part of a complex composed of the core-capsid bridging protein, the endosome lysis protein VI and the hexon-linking protein VIII; these interactions bridge the virus core to the capsid. Interacts with peripentonal hexons; this interaction stabilizes the capsid by gluing two peripentonal hexons together and joining them with an adjacent group-of-nine hexon. In terms of assembly, heterodimer with the viral protease; disulfide-linked. Interacts with the viral protease. Ubiquitinated by Nedd4 following partial capsid disassembly; which might play a role in intracellular virus movement during entry. In terms of processing, contains the major nuclear import and export signals. Proteolytically removed during virion maturation. The processing of the C-terminus turns the precursor into a mature viral structural protein and abrogates its ability to promote hexon import and act as a potential chaperone protein.

It is found in the host nucleus. Its subcellular location is the host cytoplasm. The protein resides in the virion. Functionally, during virus assembly, promotes hexon trimers nuclear import through nuclear pore complexes via an importin alpha/beta-dependent mechanism. By analogy to herpesviruses capsid assembly, might act as a chaperone to promote the formation of the icosahedral capsid. Structural component of the virion that provides increased stability to the particle shell through its interaction with the core-capsid bridging protein and the hexon-linking protein VIII. Fibers shedding during virus entry into host cell allows the endosome lysis protein to be exposed as a membrane-lytic peptide. Exhibits pH-independent membrane fragmentation activity and probably mediates viral rapid escape from host endosome via organellar membrane lysis. It is not clear if it then remains partially associated with the capsid and involved in the intracellular microtubule-dependent transport of capsid to the nucleus, or if it is lost during endosomal penetration. Its function is as follows. Cofactor that activates the viral protease. Binds to viral protease in a 1:1 ratio. The chain is Pre-protein VI from Canis lupus familiaris (Dog).